Reading from the N-terminus, the 514-residue chain is Type-2 serine--tRNA ligase (514 aa).

Position 313 (Ala-313) interacts with L-serine. Cys-315 contacts Zn(2+). Residue Arg-344 participates in L-serine binding. Residues 344–346 (RWE) and 355–356 (RV) each bind ATP. 361-363 (RGE) lines the L-serine pocket. Zn(2+) contacts are provided by Glu-363 and Cys-470. Arg-477 serves as a coordination point for ATP.

The protein belongs to the class-II aminoacyl-tRNA synthetase family. Type-2 seryl-tRNA synthetase subfamily. Homodimer. Requires Zn(2+) as cofactor.

Its subcellular location is the cytoplasm. It catalyses the reaction tRNA(Ser) + L-serine + ATP = L-seryl-tRNA(Ser) + AMP + diphosphate + H(+). The enzyme catalyses tRNA(Sec) + L-serine + ATP = L-seryl-tRNA(Sec) + AMP + diphosphate + H(+). It participates in aminoacyl-tRNA biosynthesis; selenocysteinyl-tRNA(Sec) biosynthesis; L-seryl-tRNA(Sec) from L-serine and tRNA(Sec): step 1/1. Its function is as follows. Catalyzes the attachment of serine to tRNA(Ser). Is also able to aminoacylate tRNA(Sec) with serine, to form the misacylated tRNA L-seryl-tRNA(Sec), which will be further converted into selenocysteinyl-tRNA(Sec). The polypeptide is Type-2 serine--tRNA ligase (Methanococcus maripaludis (strain C5 / ATCC BAA-1333)).